We begin with the raw amino-acid sequence, 259 residues long: DNA-directed RNA polymerase subunit Rpo3 (259 aa).

It belongs to the archaeal Rpo3/eukaryotic RPB3 RNA polymerase subunit family. Part of the RNA polymerase complex.

The protein localises to the cytoplasm. The enzyme catalyses RNA(n) + a ribonucleoside 5'-triphosphate = RNA(n+1) + diphosphate. DNA-dependent RNA polymerase (RNAP) catalyzes the transcription of DNA into RNA using the four ribonucleoside triphosphates as substrates. The sequence is that of DNA-directed RNA polymerase subunit Rpo3 from Pyrobaculum arsenaticum (strain DSM 13514 / JCM 11321 / PZ6).